A 262-amino-acid polypeptide reads, in one-letter code: Phosphatase SCO2771 (262 aa).

Functionally, displays phosphatase activity against p-nitrophenyl phosphate (pNPP) in vitro; however, the physiological substrate is unknown. The chain is Phosphatase SCO2771 from Streptomyces coelicolor (strain ATCC BAA-471 / A3(2) / M145).